The chain runs to 194 residues: Transcriptional repressor NrdR (194 aa).

Residues 3-33 (CPFCGHADDRVLDTRVQKDGSIRRRRECLEC) fold into a zinc finger. The ATP-cone domain maps to 48-138 (PFIIKKDGRR…VYRTFKDVQE (91 aa)). Positions 168–179 (ESEKSTNHETDS) are enriched in basic and acidic residues. The interval 168–194 (ESEKSTNHETDSKTPSPRTRPPGPLSN) is disordered. Pro residues predominate over residues 185–194 (RTRPPGPLSN).

The protein belongs to the NrdR family. Zn(2+) is required as a cofactor.

Functionally, negatively regulates transcription of bacterial ribonucleotide reductase nrd genes and operons by binding to NrdR-boxes. The polypeptide is Transcriptional repressor NrdR (Bdellovibrio bacteriovorus (strain ATCC 15356 / DSM 50701 / NCIMB 9529 / HD100)).